Consider the following 351-residue polypeptide: Delta(7)-sterol 5(6)-desaturase (351 aa).

The next 3 helical transmembrane spans lie at 88–108, 136–156, and 173–193; these read LSLF…VASF, GLGA…LELH, and VRLA…IYLL. The Fatty acid hydroxylase domain occupies 180-305; sequence LFFILFTDFG…FTTLWDRLGG (126 aa). The short motif at 194–198 is the Histidine box-1 element; it reads HRWLH. A Histidine box-2 motif is present at residues 207–211; it reads HKKHH. A helical transmembrane segment spans residues 237-257; it reads HLFPMLFPLHKVSYLVLFTFV. The Histidine box-3 motif lies at 282-286; sequence HTVHH.

The protein belongs to the sterol desaturase family. Fe cation serves as cofactor.

The protein localises to the endoplasmic reticulum membrane. The catalysed reaction is a Delta(7)-sterol + 2 Fe(II)-[cytochrome b5] + O2 + 2 H(+) = a Delta(5),Delta(7)-sterol + 2 Fe(III)-[cytochrome b5] + 2 H2O. It functions in the pathway steroid metabolism; ergosterol biosynthesis; ergosterol from zymosterol: step 3/5. In terms of biological role, catalyzes the introduction of a C-5 double bond in the B ring of ergosterol. May contribute to the regulation of ergosterol biosynthesis. This Eremothecium gossypii (strain ATCC 10895 / CBS 109.51 / FGSC 9923 / NRRL Y-1056) (Yeast) protein is Delta(7)-sterol 5(6)-desaturase (ERG3).